A 224-amino-acid polypeptide reads, in one-letter code: UPF0758 protein Tola_0183 (224 aa).

The 123-residue stretch at serine 102–leucine 224 folds into the MPN domain. The Zn(2+) site is built by histidine 173, histidine 175, and aspartate 186. The JAMM motif signature appears at histidine 173–aspartate 186.

It belongs to the UPF0758 family.

The chain is UPF0758 protein Tola_0183 from Tolumonas auensis (strain DSM 9187 / NBRC 110442 / TA 4).